Reading from the N-terminus, the 369-residue chain is Proton-coupled zinc antiporter SLC30A8 (369 aa).

Residues 1 to 79 (MEFLERTYLV…AKWKLCSASA (79 aa)) lie on the Cytoplasmic side of the membrane. The disordered stretch occupies residues 31–52 (PVNKDQCPRERPEELESGGMYH). Positions 32–44 (VNKDQCPRERPEE) are enriched in basic and acidic residues. Positions 52, 53, and 54 each coordinate Zn(2+). The HCH Motif; seals regulatory zinc-binding pocket motif lies at 52 to 54 (HCH). Residues 80-100 (ICFIFMIAEVVGGHIAGSLAV) traverse the membrane as a helical segment. Topologically, residues 101–103 (VTD) are lumenal, vesicle. A helical transmembrane segment spans residues 104-124 (AAHLLIDLTSFLLSLFSLWLS). The Zn(2+) site is built by His-106, Asp-110, and His-137. Residues 125–140 (SKPPSKRLTFGWHRAE) lie on the Cytoplasmic side of the membrane. A helical transmembrane segment spans residues 141–161 (ILGALLSILCIWVVTGVLVYL). The Lumenal, vesicle segment spans residues 162 to 175 (ACERLLYPDYQIQA). The helical transmembrane segment at 176 to 196 (TVMIIVSSCAVAANIVLTVVL) threads the bilayer. Residues 197-217 (HQRCLGHNHKEVQANASVRAA) lie on the Cytoplasmic side of the membrane. The chain crosses the membrane as a helical span at residues 218–238 (FVHALGDLFQSISVLISALII). 2 residues coordinate Zn(2+): His-220 and Asp-224. The Lumenal, vesicle portion of the chain corresponds to 239 to 245 (YFKPEYK). The helical transmembrane segment at 246–266 (IADPICTFIFSILVLASTITI) threads the bilayer. Over 267-369 (LKDFSILLME…DCLFCEDPCD (103 aa)) the chain is Cytoplasmic. His-301, His-318, His-345, Glu-352, Cys-361, and Cys-364 together coordinate Zn(2+).

It belongs to the cation diffusion facilitator (CDF) transporter (TC 2.A.4) family. SLC30A subfamily. In terms of assembly, homodimer. In the endocrine pancreas, expressed in insulin-producing beta cells. Expressed at relatively high levels in subcutaneous fat tissue from lean persons; much lower levels in visceral fat, whether from lean or obese individuals, and in subcutaneous fat tissue from obese individuals. Expressed in peripheral blood mononuclear cells, including T-cells and B-cells, with great variation among individuals ranging from negative to strongly positive.

It localises to the cytoplasmic vesicle. Its subcellular location is the secretory vesicle membrane. It is found in the cell membrane. The catalysed reaction is Zn(2+)(in) + 2 H(+)(out) = Zn(2+)(out) + 2 H(+)(in). In terms of biological role, proton-coupled zinc ion antiporter mediating the entry of zinc into the lumen of pancreatic beta cell secretory granules, thereby regulating insulin secretion. This Homo sapiens (Human) protein is Proton-coupled zinc antiporter SLC30A8.